The chain runs to 94 residues: Citrate lyase acyl carrier protein (94 aa).

Residue S14 is modified to O-(phosphoribosyl dephospho-coenzyme A)serine.

This sequence belongs to the CitD family. In terms of assembly, oligomer with a subunit composition of (alpha,beta,gamma)6.

The protein resides in the cytoplasm. Covalent carrier of the coenzyme of citrate lyase. This chain is Citrate lyase acyl carrier protein, found in Fusobacterium nucleatum subsp. nucleatum (strain ATCC 25586 / DSM 15643 / BCRC 10681 / CIP 101130 / JCM 8532 / KCTC 2640 / LMG 13131 / VPI 4355).